We begin with the raw amino-acid sequence, 244 residues long: CTD nuclear envelope phosphatase 1 (244 aa).

Residues 7 to 29 (LLGLRGFVAFAAKLWSFVLYLLR) form a helical membrane-spanning segment. The FCP1 homology domain occupies 57–224 (SQVKRKVLVL…LNLLPMLDAL (168 aa)).

The protein belongs to the dullard family. As to quaternary structure, interacts with bmpr1a, bmpr1b and bmpr2.

It is found in the membrane. The protein localises to the cytoplasm. Its subcellular location is the perinuclear region. The catalysed reaction is O-phospho-L-seryl-[protein] + H2O = L-seryl-[protein] + phosphate. It carries out the reaction O-phospho-L-threonyl-[protein] + H2O = L-threonyl-[protein] + phosphate. Functionally, serine/threonine protein phosphatase that may dephosphorylate and activate lipins. Lipins are phosphatidate phosphatases that catalyze the conversion of phosphatidic acid to diacylglycerol and control the metabolism of fatty acids at different levels. May indirectly modulate the lipid composition of nuclear and/or endoplasmic reticulum membranes and be required for proper nuclear membrane morphology and/or dynamics. May also indirectly regulate the production of lipid droplets and triacylglycerol. Induces neuronal differentiation by antagonizing BMP signaling. Acts both by dephosphorylating BMPR1A and by promoting BMPR2 proteasomal degradation. The polypeptide is CTD nuclear envelope phosphatase 1 (ctdnep1) (Xenopus tropicalis (Western clawed frog)).